A 289-amino-acid polypeptide reads, in one-letter code: 5'-adenylylsulfate reductase-like 7 (289 aa).

Positions 1-23 are cleaved as a signal peptide; sequence MNLWVSIFLVSAIAGSCLPSGFA. The Thioredoxin domain occupies 37–157; that stretch reads SVIEQKCPRS…LIQFYKETTG (121 aa). N-linked (GlcNAc...) asparagine glycosylation is found at N132 and N184. A helical transmembrane segment spans residues 198 to 218; it reads MVLALMFLSLKLAILIFPIMG.

The protein localises to the membrane. In Arabidopsis thaliana (Mouse-ear cress), this protein is 5'-adenylylsulfate reductase-like 7 (APRL7).